Consider the following 609-residue polypeptide: Aspartate--tRNA(Asp/Asn) ligase (609 aa).

Glu-175 is an L-aspartate binding site. The interval 199 to 202 is aspartate; the sequence is QQFK. Residues Arg-221 and His-468 each coordinate L-aspartate. An ATP-binding site is contributed by 221–223; sequence RDE. Residue Glu-502 participates in ATP binding. Residue Arg-509 participates in L-aspartate binding. ATP is bound at residue 554–557; that stretch reads GIDR.

It belongs to the class-II aminoacyl-tRNA synthetase family. Type 1 subfamily. Homodimer.

The protein resides in the cytoplasm. It carries out the reaction tRNA(Asx) + L-aspartate + ATP = L-aspartyl-tRNA(Asx) + AMP + diphosphate. In terms of biological role, aspartyl-tRNA synthetase with relaxed tRNA specificity since it is able to aspartylate not only its cognate tRNA(Asp) but also tRNA(Asn). Reaction proceeds in two steps: L-aspartate is first activated by ATP to form Asp-AMP and then transferred to the acceptor end of tRNA(Asp/Asn). This is Aspartate--tRNA(Asp/Asn) ligase from Caulobacter sp. (strain K31).